Consider the following 316-residue polypeptide: tRNA methyltransferase 10 homolog B (316 aa).

Disordered regions lie at residues 1–30 and 42–98; these read MDCE…RDDG and VEYD…DLGN. The span at 63-82 shows a compositional bias: basic residues; the sequence is VQRKQRHWERIVSSKKSKRK. Positions 75-96 form a coiled coil; sequence SSKKSKRKQERERRKIKRAEDL. Over residues 83–95 the composition is skewed to basic and acidic residues; that stretch reads QERERRKIKRAED. The 198-residue stretch at 113–310 folds into the SAM-dependent MTase TRM10-type domain; that stretch reads TKEKLLEAKH…KGVSPGKGYI (198 aa).

This sequence belongs to the class IV-like SAM-binding methyltransferase superfamily. TRM10 family.

The enzyme catalyses guanosine(9) in tRNA + S-adenosyl-L-methionine = N(1)-methylguanosine(9) in tRNA + S-adenosyl-L-homocysteine + H(+). Functionally, S-adenosyl-L-methionine-dependent guanine N(1)-methyltransferase that catalyzes the formation of N(1)-methylguanine at position 9 (m1G9) in tRNAs. Probably not able to catalyze formation of N(1)-methyladenine at position 9 (m1A9) in tRNAs. In Rattus norvegicus (Rat), this protein is tRNA methyltransferase 10 homolog B (Trmt10b).